We begin with the raw amino-acid sequence, 225 residues long: C-reactive protein (225 aa).

A signal peptide spans Met-1–Gly-19. The Pentraxin (PTX) domain maps to Ser-24–Pro-225. Cysteines 55 and 116 form a disulfide. Asn-80, Gln-158, Asp-159, and Gln-169 together coordinate Ca(2+).

Belongs to the pentraxin family. In terms of assembly, homopentamer. Pentraxin (or pentaxin) have a discoid arrangement of 5 non-covalently bound subunits. Interacts with FCN1; may regulate monocyte activation by FCN1. Ca(2+) serves as cofactor. As to expression, found in plasma.

The protein localises to the secreted. In terms of biological role, displays several functions associated with host defense: it promotes agglutination, bacterial capsular swelling, phagocytosis and complement fixation through its calcium-dependent binding to phosphorylcholine. Can interact with DNA and histones and may scavenge nuclear material released from damaged circulating cells. In Cavia porcellus (Guinea pig), this protein is C-reactive protein (CRP).